Here is a 417-residue protein sequence, read N- to C-terminus: Actin-related protein 10 (417 aa).

The protein belongs to the actin family. Subunit of dynactin, a multiprotein complex part of a tripartite complex with dynein and a adapter, such as BICDL1, BICD2 or HOOK3. The dynactin complex is built around ACTR1A/ACTB filament and consists of an actin-related filament composed of a shoulder domain, a pointed end and a barbed end. Its length is defined by its flexible shoulder domain. The soulder is composed of 2 DCTN1 subunits, 4 DCTN2 and 2 DCTN3. The 4 DCNT2 (via N-terminus) bind the ACTR1A filament and act as molecular rulers to determine the length. The pointed end is important for binding dynein-dynactin cargo adapters. Consists of 4 subunits: ACTR10, DCNT4, DCTN5 and DCTN6. The barbed end is composed of a CAPZA1:CAPZB heterodimers, which binds ACTR1A/ACTB filament and dynactin and stabilizes dynactin.

The protein resides in the cytoplasm. The protein localises to the cytoskeleton. Its function is as follows. Part of the dynactin complex that activates the molecular motor dynein for ultra-processive transport along microtubules. In Sus scrofa (Pig), this protein is Actin-related protein 10 (ACTR10).